Reading from the N-terminus, the 73-residue chain is Defensin-like protein 6 (73 aa).

The signal sequence occupies residues 1–26 (MENKFFAAFFLLLVLFSSQEIIGGEG). 4 disulfide bridges follow: C29-C73, C40-C60, C46-C67, and C50-C69.

This sequence belongs to the DEFL family.

It is found in the secreted. Confers broad-spectrum resistance to pathogens. This chain is Defensin-like protein 6 (PDF2.5), found in Arabidopsis thaliana (Mouse-ear cress).